The primary structure comprises 132 residues: Small ribosomal subunit protein uS8c (132 aa).

Belongs to the universal ribosomal protein uS8 family. As to quaternary structure, part of the 30S ribosomal subunit.

It is found in the plastid. The protein resides in the chloroplast. In terms of biological role, one of the primary rRNA binding proteins, it binds directly to 16S rRNA central domain where it helps coordinate assembly of the platform of the 30S subunit. In Cycas taitungensis (Prince sago), this protein is Small ribosomal subunit protein uS8c (rps8).